The primary structure comprises 341 residues: tRNA (cytidine(56)-2'-O)-methyltransferase (341 aa).

S-adenosyl-L-methionine contacts are provided by residues Leu-79 and 104 to 108 (GAEKV). The 108-residue stretch at 187–294 (IIRHVETVYK…VAHADNLVSM (108 aa)) folds into the HD domain.

Belongs to the aTrm56 family. Homodimer.

Its subcellular location is the cytoplasm. It carries out the reaction cytidine(56) in tRNA + S-adenosyl-L-methionine = 2'-O-methylcytidine(56) in tRNA + S-adenosyl-L-homocysteine + H(+). In terms of biological role, specifically catalyzes the AdoMet-dependent 2'-O-ribose methylation of cytidine at position 56 in tRNAs. The chain is tRNA (cytidine(56)-2'-O)-methyltransferase from Picrophilus torridus (strain ATCC 700027 / DSM 9790 / JCM 10055 / NBRC 100828 / KAW 2/3).